Consider the following 217-residue polypeptide: GTPase IMAP family member GIMD1 (217 aa).

Positions 6–217 (KMIINLAVFG…ENHFQVLSLA (212 aa)) constitute an AIG1-type G domain. Residues 15 to 23 (GRTQSGKSS), serine 36, and 148 to 150 (HAE) each bind GTP.

The protein belongs to the TRAFAC class TrmE-Era-EngA-EngB-Septin-like GTPase superfamily. AIG1/Toc34/Toc159-like paraseptin GTPase family. IAN subfamily.

In Mus musculus (Mouse), this protein is GTPase IMAP family member GIMD1 (Gimd1).